The primary structure comprises 185 residues: Peptidyl-tRNA hydrolase (185 aa).

Y14 lines the tRNA pocket. The active-site Proton acceptor is H19. Y65, N67, and N113 together coordinate tRNA.

Belongs to the PTH family. Monomer.

Its subcellular location is the cytoplasm. The catalysed reaction is an N-acyl-L-alpha-aminoacyl-tRNA + H2O = an N-acyl-L-amino acid + a tRNA + H(+). Its function is as follows. Hydrolyzes ribosome-free peptidyl-tRNAs (with 1 or more amino acids incorporated), which drop off the ribosome during protein synthesis, or as a result of ribosome stalling. Catalyzes the release of premature peptidyl moieties from peptidyl-tRNA molecules trapped in stalled 50S ribosomal subunits, and thus maintains levels of free tRNAs and 50S ribosomes. The protein is Peptidyl-tRNA hydrolase of Rickettsia africae (strain ESF-5).